Reading from the N-terminus, the 516-residue chain is Maturase K (516 aa).

Belongs to the intron maturase 2 family. MatK subfamily.

It is found in the plastid. The protein resides in the chloroplast. Functionally, usually encoded in the trnK tRNA gene intron. Probably assists in splicing its own and other chloroplast group II introns. The chain is Maturase K from Medeola virginiana (Indian cucumber root).